The primary structure comprises 320 residues: Ferrochelatase (320 aa).

Fe cation is bound by residues histidine 194 and glutamate 275.

The protein belongs to the ferrochelatase family. Monomer.

The protein localises to the cytoplasm. It carries out the reaction heme b + 2 H(+) = protoporphyrin IX + Fe(2+). It functions in the pathway porphyrin-containing compound metabolism; protoheme biosynthesis; protoheme from protoporphyrin-IX: step 1/1. Functionally, catalyzes the ferrous insertion into protoporphyrin IX. The chain is Ferrochelatase from Shigella sonnei (strain Ss046).